Here is a 291-residue protein sequence, read N- to C-terminus: Release factor glutamine methyltransferase (291 aa).

Residues 127 to 131, Asp-150, Trp-179, and Asn-196 contribute to the S-adenosyl-L-methionine site; that span reads GTGSG. 196–199 provides a ligand contact to substrate; sequence NPPY.

Belongs to the protein N5-glutamine methyltransferase family. PrmC subfamily.

It catalyses the reaction L-glutaminyl-[peptide chain release factor] + S-adenosyl-L-methionine = N(5)-methyl-L-glutaminyl-[peptide chain release factor] + S-adenosyl-L-homocysteine + H(+). In terms of biological role, methylates the class 1 translation termination release factors RF1/PrfA and RF2/PrfB on the glutamine residue of the universally conserved GGQ motif. The sequence is that of Release factor glutamine methyltransferase from Thermosynechococcus vestitus (strain NIES-2133 / IAM M-273 / BP-1).